The sequence spans 752 residues: MASYFPPGAASSHVSTRSSSPASSPLSPPAQQRSNALSNRLTSVLSASYADSDIRDALETLSLRGIHNTAEVRRQLRLDVQKEVVDSNAEIVRDFGKVAEQLKRIGTVISSLNQTCEEMKKHIVLAKQDTTPVLEEAASLMNQKREAETKQQLLDAFTKHFIVSEEDLLILTSAEEPIDERFFDLLSRVKQVHRDCEVLLGGENQRLGLELMEKSSRNLNSAYQKLYKWIQKEFRSLNLEDPRISSSIRRALRVLAERPSLFHSCLDFFAEARDYVLSDAFHYALTDAVTGAGGDNVKPIEFSAHDPLRYIGDMLAWVHSTTVSEREALESLFVADGEELAKGIQAGLNSEPWSRLDEDETVSFDGQKALSDLVNRDLTGVSRSLRQRVELVIQGHDDPVTCYKVANLLSFYRGTFSKLLGPRSNLADLLETLEKFTLRHFETLMRNQVNTLSADHAALIPSDDLSAPEFLQDALDVLTALMKTHEASFGADVSTDDGDNDSVNRFAPVLRAALDPFLELAKSTADELPNPTARAIYLTNIHLTTRSTIAAYPFASATHLTPLSTALSSLRVDLLAIQHRYLLDASGLQVLLAALEPFSPSSTNGPSDTANDGQQQKQPQPDIADIANLPAFQPDALVATSQQLDDFLPSALMDATDNLKRVQNASFAKSVTEEAVEAFCRDFEFVEGMIIGADEARAKVDVTRDRAVEDDSASDSDKDKDEDGDEDEDAEKGLGLRRLFPRTTGEIRVLLS.

Disordered regions lie at residues 1 to 36, 601 to 620, and 702 to 736; these read MASY…RSNA, SSTN…KQPQ, and VTRD…GLGL. The span at 9 to 25 shows a compositional bias: low complexity; it reads AASSHVSTRSSSPASSP. Over residues 601–619 the composition is skewed to polar residues; it reads SSTNGPSDTANDGQQQKQP. Basic and acidic residues predominate over residues 702-721; that stretch reads VTRDRAVEDDSASDSDKDKD.

It belongs to the COG6 family.

The protein resides in the golgi apparatus membrane. Functionally, acts as a component of the peripheral membrane COG complex that is involved in intra-Golgi protein trafficking. COG is located at the cis-Golgi, and regulates tethering of retrograde intra-Golgi vesicles and possibly a number of other membrane trafficking events. The chain is Conserved oligomeric Golgi complex subunit 6 (cog6) from Aspergillus terreus (strain NIH 2624 / FGSC A1156).